Consider the following 476-residue polypeptide: Cysteine--tRNA ligase (476 aa).

Residue C28 participates in Zn(2+) binding. The 'HIGH' region motif lies at 30-40; sequence PTVYDHTHLGH. Zn(2+)-binding residues include C208, H233, and E237. The 'KMSKS' region motif lies at 265 to 269; it reads KMSKS. An ATP-binding site is contributed by K268.

Belongs to the class-I aminoacyl-tRNA synthetase family. The cofactor is Zn(2+).

It is found in the cytoplasm. The enzyme catalyses tRNA(Cys) + L-cysteine + ATP = L-cysteinyl-tRNA(Cys) + AMP + diphosphate. This is Cysteine--tRNA ligase from Methanococcus maripaludis (strain C6 / ATCC BAA-1332).